The following is a 208-amino-acid chain: FMN-dependent NADH:quinone oxidoreductase (208 aa).

FMN is bound by residues 17 to 19, 99 to 102, and 143 to 146; these read SNS, MWNL, and SRGG.

The protein belongs to the azoreductase type 1 family. Homodimer. It depends on FMN as a cofactor.

The enzyme catalyses 2 a quinone + NADH + H(+) = 2 a 1,4-benzosemiquinone + NAD(+). The catalysed reaction is N,N-dimethyl-1,4-phenylenediamine + anthranilate + 2 NAD(+) = 2-(4-dimethylaminophenyl)diazenylbenzoate + 2 NADH + 2 H(+). In terms of biological role, quinone reductase that provides resistance to thiol-specific stress caused by electrophilic quinones. Its function is as follows. Also exhibits azoreductase activity. Catalyzes the reductive cleavage of the azo bond in aromatic azo compounds to the corresponding amines. This chain is FMN-dependent NADH:quinone oxidoreductase, found in Staphylococcus aureus (strain MRSA252).